A 109-amino-acid chain; its full sequence is uncharacterized protein (109 aa).

2 helical membrane-spanning segments follow: residues 24–44 (SLGI…SAFV) and 68–88 (VIVL…SIFI).

Its subcellular location is the membrane. This is an uncharacterized protein from Saccharomyces cerevisiae (strain ATCC 204508 / S288c) (Baker's yeast).